We begin with the raw amino-acid sequence, 118 residues long: Large ribosomal subunit protein bL20 (118 aa).

This sequence belongs to the bacterial ribosomal protein bL20 family.

Functionally, binds directly to 23S ribosomal RNA and is necessary for the in vitro assembly process of the 50S ribosomal subunit. It is not involved in the protein synthesizing functions of that subunit. This chain is Large ribosomal subunit protein bL20, found in Cyanothece sp. (strain PCC 7425 / ATCC 29141).